We begin with the raw amino-acid sequence, 596 residues long: Elongation factor 4 (596 aa).

Positions 2 to 183 constitute a tr-type G domain; that stretch reads ENIRNFCIIA…AIIQRIPPPK (182 aa). Residues 14–19 and 130–133 contribute to the GTP site; these read DHGKST and NKID.

The protein belongs to the TRAFAC class translation factor GTPase superfamily. Classic translation factor GTPase family. LepA subfamily.

The protein resides in the cell inner membrane. The catalysed reaction is GTP + H2O = GDP + phosphate + H(+). Functionally, required for accurate and efficient protein synthesis under certain stress conditions. May act as a fidelity factor of the translation reaction, by catalyzing a one-codon backward translocation of tRNAs on improperly translocated ribosomes. Back-translocation proceeds from a post-translocation (POST) complex to a pre-translocation (PRE) complex, thus giving elongation factor G a second chance to translocate the tRNAs correctly. Binds to ribosomes in a GTP-dependent manner. This Cytophaga hutchinsonii (strain ATCC 33406 / DSM 1761 / CIP 103989 / NBRC 15051 / NCIMB 9469 / D465) protein is Elongation factor 4.